The sequence spans 145 residues: 3-dehydroquinate dehydratase (145 aa).

The active-site Proton acceptor is Tyr23. 3 residues coordinate substrate: Asn75, His81, and Asp88. The active-site Proton donor is His101. Residues 102 to 103 (IS) and Arg112 each bind substrate.

Belongs to the type-II 3-dehydroquinase family. As to quaternary structure, homododecamer.

It carries out the reaction 3-dehydroquinate = 3-dehydroshikimate + H2O. It participates in metabolic intermediate biosynthesis; chorismate biosynthesis; chorismate from D-erythrose 4-phosphate and phosphoenolpyruvate: step 3/7. Catalyzes a trans-dehydration via an enolate intermediate. This Caldicellulosiruptor bescii (strain ATCC BAA-1888 / DSM 6725 / KCTC 15123 / Z-1320) (Anaerocellum thermophilum) protein is 3-dehydroquinate dehydratase.